The chain runs to 710 residues: F-box only protein 40 (710 aa).

Residues 53–114 form a TRAF-type zinc finger; the sequence is EHTLLCPLEQ…VDSETFLHEN (62 aa). Disordered stretches follow at residues 152–174 and 234–279; these read DATE…GAVG and GSLG…SQEL. Residues 238 to 248 show a composition bias toward basic and acidic residues; it reads KSEDKNGDVAG. Residues 572–626 form the F-box domain; it reads LNSLTSLPLEVLQYIAGFLDSISLSQLSQVSVLMRNICATLLQERGMVLSQWKKK.

As to quaternary structure, directly interacts with SKP1 and CUL1. Expressed only in heart and skeletal muscle.

Its subcellular location is the cytoplasm. In terms of biological role, probable substrate-recognition component of the SCF (SKP1-CUL1-F-box protein)-type E3 ubiquitin ligase complex that may function in myogenesis. The sequence is that of F-box only protein 40 (Fbxo40) from Mus musculus (Mouse).